We begin with the raw amino-acid sequence, 89 residues long: Small ribosomal subunit protein uS15 (89 aa).

The protein belongs to the universal ribosomal protein uS15 family. In terms of assembly, part of the 30S ribosomal subunit. Forms a bridge to the 50S subunit in the 70S ribosome, contacting the 23S rRNA.

Its function is as follows. One of the primary rRNA binding proteins, it binds directly to 16S rRNA where it helps nucleate assembly of the platform of the 30S subunit by binding and bridging several RNA helices of the 16S rRNA. Forms an intersubunit bridge (bridge B4) with the 23S rRNA of the 50S subunit in the ribosome. This is Small ribosomal subunit protein uS15 from Protochlamydia amoebophila (strain UWE25).